Consider the following 261-residue polypeptide: HTH-type transcriptional repressor CsqR (261 aa).

An HTH deoR-type domain is found at 8–63; sequence GNPRHDQLLMLIAERGYMNIDELANLLDVSTQTVRRDIRKLSEQGLITRHHGGAGR. A DNA-binding region (H-T-H motif) is located at residues 25-44; the sequence is MNIDELANLLDVSTQTVRRD.

As to quaternary structure, monomer in the absence of DNA. Exhibits a high level of cooperativity once it is bound to its target DNA.

Its activity is regulated as follows. Inactivated in the presence of the effectors sulfoquinovose and sulfoquinovosyl glycerol, leading to the de-repression of the target genes. In terms of biological role, involved in the regulation of the sulfoquinovose operon. Represses the expression of the yihUTS operon and of the yihV and csqR genes. Binds DNA inside the spacer between the bidirectional transcription units comprising the yihUTS operon and the yihV gene, and upstream the csqR gene itself. This chain is HTH-type transcriptional repressor CsqR, found in Escherichia coli (strain K12).